The primary structure comprises 193 residues: dCTP deaminase (193 aa).

Residues 110–115, aspartate 128, 136–138, tyrosine 171, lysine 178, and glutamine 182 each bind dCTP; these read RSSLAR and VLE. The Proton donor/acceptor role is filled by glutamate 138. Positions 169-193 are disordered; the sequence is RPYNRREDAKYRNQQGAVASRIDKD.

The protein belongs to the dCTP deaminase family. As to quaternary structure, homotrimer.

The catalysed reaction is dCTP + H2O + H(+) = dUTP + NH4(+). It functions in the pathway pyrimidine metabolism; dUMP biosynthesis; dUMP from dCTP (dUTP route): step 1/2. Its function is as follows. Catalyzes the deamination of dCTP to dUTP. The sequence is that of dCTP deaminase from Sodalis glossinidius (strain morsitans).